Consider the following 319-residue polypeptide: Aspartate carbamoyltransferase catalytic subunit (319 aa).

Carbamoyl phosphate-binding residues include R65 and T66. L-aspartate is bound at residue K93. Positions 115, 143, and 146 each coordinate carbamoyl phosphate. 2 residues coordinate L-aspartate: R176 and R230. 2 residues coordinate carbamoyl phosphate: G271 and P272.

Belongs to the aspartate/ornithine carbamoyltransferase superfamily. ATCase family. Heterododecamer (2C3:3R2) of six catalytic PyrB chains organized as two trimers (C3), and six regulatory PyrI chains organized as three dimers (R2).

It carries out the reaction carbamoyl phosphate + L-aspartate = N-carbamoyl-L-aspartate + phosphate + H(+). It participates in pyrimidine metabolism; UMP biosynthesis via de novo pathway; (S)-dihydroorotate from bicarbonate: step 2/3. Functionally, catalyzes the condensation of carbamoyl phosphate and aspartate to form carbamoyl aspartate and inorganic phosphate, the committed step in the de novo pyrimidine nucleotide biosynthesis pathway. This chain is Aspartate carbamoyltransferase catalytic subunit, found in Chelativorans sp. (strain BNC1).